A 403-amino-acid polypeptide reads, in one-letter code: MNDACLLFPASKELDSQNVAVILADDMKHSESILQLGSGAPRKGFPLTSSPLLPMVTPWPFSQDHAAPTLYSLLVAYYKSFQSQKLDPPKWLWQCLGDPSGRKCMVTQFLLPPLGQVRISCYRNLTSIVICQAVDPWENNNEADWRKNPMARPRIKCDHALCFKVVYEGTLWRPHDQKCWLIRLTEGHKYGMEELSPGDWKILQESRPYPYGPIGEDPNLQYAVGVKMKVIGGPLTSTVLALKALSFHRVNICNMDNPSLGEGHAPLRYSHALKAYGPQYGSCEERVWQTATKCIGPEEENYWCEYDHRGFFPMVPNKLSPTWVRHAAPYCIQRFATPYDLQYFANELLPPGFSITTPKGVSYTSDRRLHYGNEGTLQEYNENCDKVKRGYDEISSSDYSDEN.

The protein belongs to the spumavirus protein Bel-2 family.

The polypeptide is Protein Bel-2 (bel2) (Homo sapiens (Human)).